Reading from the N-terminus, the 351-residue chain is MGKLQDGIAIKRINDAITTFKNYKLDELEQGGSMAINTLSNVRAHVGLAWPAILRNCLIHTSSHLGFMKFMIDIATTWKVGAFTLLGSVGDEDPFTDVDLIYTKTCLHLGLKDNDFLQFPEEFAYEANSFLEAQSMNARVDMLTGVHNIEDKYVFRMQSISKFLKAYYTASEDVAYLTGFIKPDDSKDSILSAELLKAQVTSEVLRVRNLITTKIQKYINLYEDSQLPHFRQAALSYTQDWDVDGGVPAALPQPDITDDESPVTNPGPSAPPVSKGADQPEDEEMIRKKVETSKDAPPKAVPSGNVSARGIPAFLEDDMSEMDAPDGFHDYLTREHENNFDLAQLGLAPSV.

The disordered stretch occupies residues 246–308; sequence GVPAALPQPD…KAVPSGNVSA (63 aa). Basic and acidic residues predominate over residues 285-297; that stretch reads MIRKKVETSKDAP.

The protein belongs to the phytoreovirus minor outer capsid protein P9 family.

It is found in the virion. The protein resides in the host cytoplasm. Its function is as follows. Minor outer capsid protein. The protein is Minor outer capsid protein P9 of Rice dwarf virus (isolate O) (RDV).